The chain runs to 583 residues: 2-succinyl-5-enolpyruvyl-6-hydroxy-3-cyclohexene-1-carboxylate synthase (583 aa).

Belongs to the TPP enzyme family. MenD subfamily. In terms of assembly, homodimer. Requires Mg(2+) as cofactor. The cofactor is Mn(2+). It depends on thiamine diphosphate as a cofactor.

It catalyses the reaction isochorismate + 2-oxoglutarate + H(+) = 5-enolpyruvoyl-6-hydroxy-2-succinyl-cyclohex-3-ene-1-carboxylate + CO2. Its pathway is quinol/quinone metabolism; 1,4-dihydroxy-2-naphthoate biosynthesis; 1,4-dihydroxy-2-naphthoate from chorismate: step 2/7. It functions in the pathway quinol/quinone metabolism; menaquinone biosynthesis. Functionally, catalyzes the thiamine diphosphate-dependent decarboxylation of 2-oxoglutarate and the subsequent addition of the resulting succinic semialdehyde-thiamine pyrophosphate anion to isochorismate to yield 2-succinyl-5-enolpyruvyl-6-hydroxy-3-cyclohexene-1-carboxylate (SEPHCHC). The sequence is that of 2-succinyl-5-enolpyruvyl-6-hydroxy-3-cyclohexene-1-carboxylate synthase from Roseiflexus sp. (strain RS-1).